The chain runs to 325 residues: Probable 2-ketogluconate reductase (325 aa).

NAD(+) contacts are provided by residues 158 to 159 (RI), Thr211, 238 to 240 (ISR), and Asp264. Arg240 is an active-site residue. Residue Glu269 is part of the active site. Catalysis depends on His288, which acts as the Proton donor. NAD(+) is bound at residue 288–291 (HIGS).

The protein belongs to the D-isomer specific 2-hydroxyacid dehydrogenase family.

It carries out the reaction D-gluconate + NADP(+) = 2-dehydro-D-gluconate + NADPH + H(+). This Bacillus subtilis (strain 168) protein is Probable 2-ketogluconate reductase (yvcT).